A 240-amino-acid polypeptide reads, in one-letter code: Uridylate kinase (240 aa).

12 to 15 (KLSG) is a binding site for ATP. Gly54 is a UMP binding site. 2 residues coordinate ATP: Gly55 and Arg59. Residues Asp74 and 135–142 (TGNPFFTT) each bind UMP. The ATP site is built by Thr162, Tyr168, and Asp171.

Belongs to the UMP kinase family. Homohexamer.

The protein resides in the cytoplasm. It carries out the reaction UMP + ATP = UDP + ADP. It participates in pyrimidine metabolism; CTP biosynthesis via de novo pathway; UDP from UMP (UMPK route): step 1/1. Its activity is regulated as follows. Inhibited by UTP. Its function is as follows. Catalyzes the reversible phosphorylation of UMP to UDP. The polypeptide is Uridylate kinase (Xanthomonas axonopodis pv. citri (strain 306)).